A 343-amino-acid chain; its full sequence is Undecaprenyl-diphosphatase 2 (343 aa).

4 consecutive transmembrane segments (helical) span residues 21–41, 57–77, 104–124, and 129–149; these read LFPVSSLGHSVLIPALIGGSW, PYLTFVVGLHVATAVALLVFF, LAWLIVAATVPVGIIGLALEH, and LFAKPLAAALFLTANGMILLA. The segment covering 179–193 has biased composition (low complexity); sequence VPAPATVPTQTTSAP. The segment at 179-202 is disordered; sequence VPAPATVPTQTTSAPGGRATARHT. Helical transmembrane passes span 225 to 245, 265 to 285, 294 to 314, and 322 to 342; these read AGVIGLFQTLALLAGISRSGI, FLLATPVILAAGLLKLPALAG, QVILGALIAGIAAYLSIRFLV, and LTPFAIYCLLTGALCTVRFAI.

It belongs to the UppP family.

It is found in the cell membrane. It catalyses the reaction di-trans,octa-cis-undecaprenyl diphosphate + H2O = di-trans,octa-cis-undecaprenyl phosphate + phosphate + H(+). In terms of biological role, catalyzes the dephosphorylation of undecaprenyl diphosphate (UPP). Confers resistance to bacitracin. The protein is Undecaprenyl-diphosphatase 2 of Frankia alni (strain DSM 45986 / CECT 9034 / ACN14a).